The following is a 151-amino-acid chain: Macrodomain Ter protein (151 aa).

The protein belongs to the MatP family. As to quaternary structure, homodimer.

It localises to the cytoplasm. Required for spatial organization of the terminus region of the chromosome (Ter macrodomain) during the cell cycle. Prevents early segregation of duplicated Ter macrodomains during cell division. Binds specifically to matS, which is a 13 bp signature motif repeated within the Ter macrodomain. The chain is Macrodomain Ter protein from Escherichia fergusonii (strain ATCC 35469 / DSM 13698 / CCUG 18766 / IAM 14443 / JCM 21226 / LMG 7866 / NBRC 102419 / NCTC 12128 / CDC 0568-73).